A 475-amino-acid chain; its full sequence is Early growth response protein 1-B (475 aa).

Disordered regions lie at residues 109–180 (NVSS…TASI) and 264–285 (PSRM…RPYA). A compositionally biased stretch (low complexity) spans 111 to 140 (SSSSAPSSSPSSSSSSSSSSSSQSPPLSCS). Residues 170 to 179 (QPFQNASTAS) are compositionally biased toward polar residues. 3 consecutive C2H2-type zinc fingers follow at residues 284-308 (YACP…IRIH), 314-336 (FQCR…IRTH), and 342-364 (FACD…TKIH). Residues 355 to 379 (DERKRHTKIHLRQKDKKADKATPVS) form a disordered region. The span at 359 to 369 (RHTKIHLRQKD) shows a compositional bias: basic residues.

This sequence belongs to the EGR C2H2-type zinc-finger protein family.

The protein localises to the nucleus. It localises to the cytoplasm. Transcriptional regulator. Recognizes and binds to the DNA sequence 5'-GCG(T/G)GGGCG-3'(EGR-site) in the promoter region of target genes. Binds double-stranded target DNA, irrespective of the cytosine methylation status. Regulates the transcription of numerous target genes, and thereby plays an important role in regulating the response to growth factors, DNA damage, and ischemia. Plays a role in the regulation of cell survival, proliferation and cell death. Mediates responses to ischemia and hypoxia; regulates the expression of proteins that are involved in inflammatory processes. Plays a role in regulating the expression of circadian clock genes. In Xenopus laevis (African clawed frog), this protein is Early growth response protein 1-B (egr1-b).